Here is a 179-residue protein sequence, read N- to C-terminus: Acireductone dioxygenase (179 aa).

Histidine 99, histidine 101, glutamate 105, and histidine 144 together coordinate Fe(2+). Ni(2+) contacts are provided by histidine 99, histidine 101, glutamate 105, and histidine 144.

It belongs to the acireductone dioxygenase (ARD) family. In terms of assembly, monomer. Requires Fe(2+) as cofactor. It depends on Ni(2+) as a cofactor.

It carries out the reaction 1,2-dihydroxy-5-(methylsulfanyl)pent-1-en-3-one + O2 = 3-(methylsulfanyl)propanoate + CO + formate + 2 H(+). The catalysed reaction is 1,2-dihydroxy-5-(methylsulfanyl)pent-1-en-3-one + O2 = 4-methylsulfanyl-2-oxobutanoate + formate + 2 H(+). The protein operates within amino-acid biosynthesis; L-methionine biosynthesis via salvage pathway; L-methionine from S-methyl-5-thio-alpha-D-ribose 1-phosphate: step 5/6. Functionally, catalyzes 2 different reactions between oxygen and the acireductone 1,2-dihydroxy-3-keto-5-methylthiopentene (DHK-MTPene) depending upon the metal bound in the active site. Fe-containing acireductone dioxygenase (Fe-ARD) produces formate and 2-keto-4-methylthiobutyrate (KMTB), the alpha-ketoacid precursor of methionine in the methionine recycle pathway. Ni-containing acireductone dioxygenase (Ni-ARD) produces methylthiopropionate, carbon monoxide and formate, and does not lie on the methionine recycle pathway. In Exiguobacterium sibiricum (strain DSM 17290 / CCUG 55495 / CIP 109462 / JCM 13490 / 255-15), this protein is Acireductone dioxygenase.